A 189-amino-acid chain; its full sequence is UPF0340 protein SAG0103 (189 aa).

This sequence belongs to the UPF0340 family.

The polypeptide is UPF0340 protein SAG0103 (Streptococcus agalactiae serotype V (strain ATCC BAA-611 / 2603 V/R)).